The primary structure comprises 1314 residues: Angiotensin-converting enzyme (1314 aa).

The signal sequence occupies residues 1–35 (MGAASGQRGQGPPSPLLLLWLSLLLLLLPPSPAPA). Topologically, residues 36–1265 (LDPGLQPGNF…LEPQQARVGQ (1230 aa)) are extracellular. Residues Asn-44, Asn-60, Asn-80, Asn-117, and Asn-166 are each glycosylated (N-linked (GlcNAc...) asparagine). Peptidase M2 domains follow at residues 46–630 (SADE…LGWP) and 649–1228 (VTDE…LGWP). A disulfide bridge connects residues Cys-163 and Cys-171. Tyr-237 contributes to the chloride binding site. Asn-324 is a glycosylation site (N-linked (GlcNAc...) asparagine). Cysteines 365 and 383 form a disulfide. Zn(2+) is bound at residue His-396. The active-site Proton acceptor 1 is the Glu-397. Zn(2+) is bound by residues His-400 and Glu-424. A glycan (N-linked (GlcNAc...) asparagine) is linked at Asn-515. His-526 acts as the Proton donor 1 in catalysis. Arg-535 provides a ligand contact to chloride. Cys-551 and Cys-563 are disulfide-bonded. 4 N-linked (GlcNAc...) asparagine glycosylation sites follow: Asn-683, Asn-701, Asn-720, and Asn-766. The cysteines at positions 763 and 769 are disulfide-linked. Residues Arg-797 and Tyr-835 each coordinate chloride. N-linked (GlcNAc...) asparagine glycosylation occurs at Asn-948. A disulfide bridge connects residues Cys-963 and Cys-981. His-994 lines the Zn(2+) pocket. The active-site Proton acceptor 2 is Glu-995. Zn(2+)-binding residues include His-998 and Glu-1022. Chloride is bound by residues Trp-1096 and Arg-1100. His-1124 acts as the Proton donor 2 in catalysis. Arg-1133 is a chloride binding site. An intrachain disulfide couples Cys-1149 to Cys-1161. A glycan (N-linked (GlcNAc...) asparagine) is linked at Asn-1197. A juxtamembrane stalk region spans residues 1221–1262 (HGETLGWPEYNWTPNTARSEGPFPESGRVNFLGMYLEPQQAR). A helical membrane pass occupies residues 1266 to 1282 (WVLLFLGVSLLVATLGL). Over 1283–1314 (THRLFSIRQHGHSLHRPHRGPQFGSEVELRHS) the chain is Cytoplasmic. The interval 1293-1314 (GHSLHRPHRGPQFGSEVELRHS) is disordered. Ser-1307 bears the Phosphoserine mark.

It belongs to the peptidase M2 family. Monomer and homodimer; homodimerizes following binding to an inhibitor. Interacts with calmodulin (CALM1, CALM2 or CALM3); interaction takes place in the cytoplasmic region and regulates phosphorylation and proteolytic cleavage. Requires Zn(2+) as cofactor. The cofactor is chloride. In terms of processing, produced following proteolytic cleavage by secretase enzymes that cleave the transmembrane form in the juxtamembrane stalk region upstream of the transmembrane region. Cleavage can take place at different sites of the juxtamembrane stalk region. Post-translationally, phosphorylated by CK2 on Ser-1307; which allows membrane retention. Phosphorylated on tyrosine residues on its extracellular part, promoting cleavage by secretase enzymes and formation of the soluble form (Angiotensin-converting enzyme, soluble form). In terms of tissue distribution, widely expressed with dominant expression in lung and kidney.

It is found in the cell membrane. It localises to the cytoplasm. The protein localises to the secreted. It catalyses the reaction Release of a C-terminal dipeptide, oligopeptide-|-Xaa-Yaa, when Xaa is not Pro, and Yaa is neither Asp nor Glu. Thus, conversion of angiotensin I to angiotensin II, with increase in vasoconstrictor activity, but no action on angiotensin II.. It carries out the reaction angiotensin I + H2O = L-histidyl-L-leucine + angiotensin II. The catalysed reaction is bradykinin + H2O = L-Phe-L-Arg + bradykinin(1-7). The enzyme catalyses substance P + H2O = substance P(1-9) + L-Leu-L-Met-NH2. It catalyses the reaction substance P + H2O = substance P(1-8) + Gly-L-Leu-L-Met-NH2. It carries out the reaction substance P + H2O = L-Phe-L-Phe-Gly-L-Leu-L-Met-NH2 + substance P(1-6). The catalysed reaction is neurotensin + H2O = neurotensin(1-11) + L-isoleucyl-L-leucine. The enzyme catalyses goralatide + H2O = N-acetyl-L-seryl-L-aspartate + L-lysyl-L-proline. It catalyses the reaction Met-enkephalin + H2O = L-phenylalanyl-L-methionine + L-tyrosylglycylglycine. It carries out the reaction Leu-enkephalin + H2O = L-tyrosylglycylglycine + L-phenylalanyl-L-leucine. The catalysed reaction is Met-enkephalin-Arg-Phe + H2O = L-arginyl-L-phenylalanine + Met-enkephalin. With respect to regulation, the dipeptidyl carboxypeptidase activity is strongly activated by chloride. The dipeptidyl carboxypeptidase activity is specifically inhibited by lisinopril, captopril and enalaprilat. Its activity is regulated as follows. Strongly inhibited by lisinopril and captopril. In terms of biological role, dipeptidyl carboxypeptidase that removes dipeptides from the C-terminus of a variety of circulating hormones, such as angiotensin I, bradykinin or enkephalins, thereby playing a key role in the regulation of blood pressure, electrolyte homeostasis or synaptic plasticity. Composed of two similar catalytic domains, each possessing a functional active site, with different selectivity for substrates. Plays a major role in the angiotensin-renin system that regulates blood pressure and sodium retention by the kidney by converting angiotensin I to angiotensin II, resulting in an increase of the vasoconstrictor activity of angiotensin. Also able to inactivate bradykinin, a potent vasodilator, and therefore enhance the blood pressure response. Acts as a regulator of synaptic transmission by mediating cleavage of neuropeptide hormones, such as substance P, neurotensin or enkephalins. Catalyzes degradation of different enkephalin neuropeptides (Met-enkephalin, Leu-enkephalin, Met-enkephalin-Arg-Phe and possibly Met-enkephalin-Arg-Gly-Leu). Acts as a regulator of synaptic plasticity in the nucleus accumbens of the brain by mediating cleavage of Met-enkephalin-Arg-Phe, a strong ligand of Mu-type opioid receptor OPRM1, into Met-enkephalin. Met-enkephalin-Arg-Phe cleavage by ACE decreases activation of OPRM1, leading to long-term synaptic potentiation of glutamate release. Also acts as a regulator of hematopoietic stem cell differentiation by mediating degradation of hemoregulatory peptide N-acetyl-SDKP (AcSDKP). Acts as a regulator of cannabinoid signaling pathway by mediating degradation of hemopressin, an antagonist peptide of the cannabinoid receptor CNR1. Involved in amyloid-beta metabolism by catalyzing degradation of Amyloid-beta protein 40 and Amyloid-beta protein 42 peptides, thereby preventing plaque formation. Catalyzes cleavage of cholecystokinin (maturation of Cholecystokinin-8 and Cholecystokinin-5) and Gonadoliberin-1 (both maturation and degradation) hormones. Degradation of hemoregulatory peptide N-acetyl-SDKP (AcSDKP) and amyloid-beta proteins is mediated by the N-terminal catalytic domain, while angiotensin I and cholecystokinin cleavage is mediated by the C-terminal catalytic region. Functionally, soluble form that is released in blood plasma and other body fluids following proteolytic cleavage in the juxtamembrane stalk region. Its function is as follows. Isoform produced by alternative promoter usage that is specifically expressed in spermatocytes and adult testis, and which is required for male fertility. In contrast to somatic isoforms, only contains one catalytic domain. Acts as a dipeptidyl carboxypeptidase that removes dipeptides from the C-terminus of substrates. The identity of substrates that are needed for male fertility is unknown. May also have a glycosidase activity which releases GPI-anchored proteins from the membrane by cleaving the mannose linkage in the GPI moiety. The GPIase activity was reported to be essential for the egg-binding ability of the sperm. This activity is however unclear and has been challenged by other groups, suggesting that it may be indirect. In Mesocricetus auratus (Golden hamster), this protein is Angiotensin-converting enzyme.